The following is a 269-amino-acid chain: CCAAT/enhancer-binding protein delta (269 aa).

Disordered stretches follow at residues M1–A48, P97–S133, and A151–M219. The residue at position 2 (S2) is an N-acetylserine. Low complexity-rich tracts occupy residues G36 to A48 and P97 to R107. K120 participates in a covalent cross-link: Glycyl lysine isopeptide (Lys-Gly) (interchain with G-Cter in SUMO). Positions P155 to G175 are enriched in pro residues. Over residues A177–N201 the composition is skewed to basic and acidic residues. The region spanning S191–L254 is the bZIP domain. Residues R195–K222 are basic motif. Residues L226 to L254 form a leucine-zipper region.

It belongs to the bZIP family. C/EBP subfamily. As to quaternary structure, binds DNA as a homodimer and as a heterodimer. Can form stable heterodimers with CEBPB. Can form stable heterodimers with CEBPA and CEBPE. Directly interacts with SPI1/PU.1; this interaction does not affect DNA-binding properties of each partner. Interacts with PRDM16.

The protein resides in the nucleus. Transcription activator that recognizes two different DNA motifs: the CCAAT homology common to many promoters and the enhanced core homology common to many enhancers. Important transcription factor regulating the expression of genes involved in immune and inflammatory responses. Transcriptional activator that enhances IL6 transcription alone and as heterodimer with CEBPB. The protein is CCAAT/enhancer-binding protein delta (CEBPD) of Homo sapiens (Human).